A 432-amino-acid chain; its full sequence is MNFDVAIIGGGLAGLTCGIAIQQRGKRCVIINNGQAAIDFASGSLDLLSRMPSTSNGESRTVENLKENITALRNELPAHPYSLLGAEKVLAKAQDFERLANELHLDLIGSTEKNHWRVTGLGSLRGAWLSPNSVPTVQGNELFPHKRIAVLGIEGYHDFQPQLLAANLVLNPQFEHCEVTSGFLNIPQLDELRKNAREFRSVNISQLLEHKLAFKDLVKEIIESSQGAEAVFLPACFGLENQEFMTALRDATKLALFELPTLPPSLLGMRQRIQLRHKFESLGGLMINGDSALNATFEGNKVRCINTRLLEDEEITADNFVLASGSFFSKGLISEFDKIYEPVFESDIIGVEGFNQKDRFTWTVHRFAHPQPYQSAGVAINAQCQVQKCGQFLTNLYAVGNVIGGFNALELGCGSGVAVVTALAVADEILAK.

Belongs to the anaerobic G-3-P dehydrogenase subunit B family. As to quaternary structure, composed of a catalytic GlpA/B dimer and of membrane bound GlpC. It depends on FMN as a cofactor.

It carries out the reaction a quinone + sn-glycerol 3-phosphate = dihydroxyacetone phosphate + a quinol. Its pathway is polyol metabolism; glycerol degradation via glycerol kinase pathway; glycerone phosphate from sn-glycerol 3-phosphate (anaerobic route): step 1/1. Conversion of glycerol 3-phosphate to dihydroxyacetone. Uses fumarate or nitrate as electron acceptor. The chain is Anaerobic glycerol-3-phosphate dehydrogenase subunit B from Haemophilus influenzae (strain PittGG).